Consider the following 35-residue polypeptide: Coenzyme PQQ synthesis protein A (35 aa).

The pyrroloquinoline quinone (Glu-Tyr) cross-link spans 16–20; the sequence is EINMY.

This sequence belongs to the PqqA family.

Its pathway is cofactor biosynthesis; pyrroloquinoline quinone biosynthesis. Its function is as follows. Required for coenzyme pyrroloquinoline quinone (PQQ) biosynthesis. PQQ is probably formed by cross-linking a specific glutamate to a specific tyrosine residue and excising these residues from the peptide. This is Coenzyme PQQ synthesis protein A from Ruegeria pomeroyi (strain ATCC 700808 / DSM 15171 / DSS-3) (Silicibacter pomeroyi).